The following is a 282-amino-acid chain: MTSTQNHPLQTQDDQQRFGQSPESVRETDHYQQEYIEDFTDRWDRLIDWNARAEAEGDFFIRLLKEHGARSVLDVATGTGFHSIRLLEEGFDVVSADGSPNMLARAFRNARNRDQLLRTSQADWRFLNRDIHGEFDAVICLGNSFTHLFKERDRRKALAEYYAVLKHNGILILDHRNYDRLLEGGSAVRQGKGNVYCGKDVEVGPEHVDEGLARFRYSFSDGGVYHLNMFPLRYGYVRRLMSEVGFQQITSFGDYQRDFENPDFYVHVAEKEYRFDVDTTMH.

Residues 1–23 show a composition bias toward polar residues; it reads MTSTQNHPLQTQDDQQRFGQSPE. The interval 1–27 is disordered; the sequence is MTSTQNHPLQTQDDQQRFGQSPESVRE. Residues Y35, W43, R52, A76, D97, 123–124, and L141 each bind S-adenosyl-L-methionine; that span reads DW. Residues N143, R176, and Y217 each coordinate substrate.

Belongs to the class I-like SAM-binding methyltransferase superfamily. Glycine N-methyltransferase family. As to quaternary structure, monomer.

The enzyme catalyses glycine + 2 S-adenosyl-L-methionine = N,N-dimethylglycine + 2 S-adenosyl-L-homocysteine + 2 H(+). The catalysed reaction is glycine + S-adenosyl-L-methionine = sarcosine + S-adenosyl-L-homocysteine + H(+). It catalyses the reaction sarcosine + S-adenosyl-L-methionine = N,N-dimethylglycine + S-adenosyl-L-homocysteine + H(+). It participates in amine and polyamine biosynthesis; betaine biosynthesis via glycine pathway; betaine from glycine: step 1/3. It functions in the pathway amine and polyamine biosynthesis; betaine biosynthesis via glycine pathway; betaine from glycine: step 2/3. Functionally, catalyzes the methylation of glycine and sarcosine to sarcosine and dimethylglycine, respectively, with S-adenosylmethionine (AdoMet) acting as the methyl donor. It has strict specificity for glycine and sarcosine as the methyl group acceptors. This chain is Glycine/sarcosine N-methyltransferase, found in Parasynechococcus marenigrum (strain WH8102).